Reading from the N-terminus, the 387-residue chain is S-adenosylmethionine synthase (387 aa).

Residue Glu8 participates in Mg(2+) binding. ATP is bound at residue His14. Glu42 is a binding site for K(+). 2 residues coordinate L-methionine: Glu55 and Gln98. Residues 166-168 (DGK), 234-237 (SGRF), Asp245, 251-252 (RK), Ala268, Lys272, and Lys276 contribute to the ATP site. Residue Asp245 participates in L-methionine binding. An L-methionine-binding site is contributed by Lys276.

This sequence belongs to the AdoMet synthase family. As to quaternary structure, homotetramer. The cofactor is Mn(2+). It depends on Mg(2+) as a cofactor. Co(2+) serves as cofactor. Requires K(+) as cofactor.

It is found in the cytoplasm. The catalysed reaction is L-methionine + ATP + H2O = S-adenosyl-L-methionine + phosphate + diphosphate. It functions in the pathway amino-acid biosynthesis; S-adenosyl-L-methionine biosynthesis; S-adenosyl-L-methionine from L-methionine: step 1/1. Catalyzes the formation of S-adenosylmethionine from methionine and ATP. The reaction comprises two steps that are both catalyzed by the same enzyme: formation of S-adenosylmethionine (AdoMet) and triphosphate, and subsequent hydrolysis of the triphosphate. This Ostreococcus lucimarinus (strain CCE9901) protein is S-adenosylmethionine synthase (METK-1).